We begin with the raw amino-acid sequence, 779 residues long: Catalase-peroxidase (779 aa).

The segment at residues 148–270 (WHSAGTYRIT…LGAVQMGLIY (123 aa)) is a cross-link (tryptophyl-tyrosyl-methioninium (Trp-Tyr) (with M-296)). Catalysis depends on His-149, which acts as the Proton acceptor. The segment at residues 270–296 (YVNPEGPNGKPDPIAAAKDIRETFFRM) is a cross-link (tryptophyl-tyrosyl-methioninium (Tyr-Met) (with W-148)). Heme b is bound at residue His-311.

Belongs to the peroxidase family. Peroxidase/catalase subfamily. As to quaternary structure, homodimer or homotetramer. The cofactor is heme b. In terms of processing, formation of the three residue Trp-Tyr-Met cross-link is important for the catalase, but not the peroxidase activity of the enzyme.

It carries out the reaction H2O2 + AH2 = A + 2 H2O. The catalysed reaction is 2 H2O2 = O2 + 2 H2O. Its function is as follows. Bifunctional enzyme with both catalase and broad-spectrum peroxidase activity. The polypeptide is Catalase-peroxidase (Bradyrhizobium diazoefficiens (strain JCM 10833 / BCRC 13528 / IAM 13628 / NBRC 14792 / USDA 110)).